Reading from the N-terminus, the 682-residue chain is Methionine--tRNA ligase (682 aa).

A 'HIGH' region motif is present at residues 15–25 (PYANGAIHLGH). Cysteine 146, cysteine 149, cysteine 159, and cysteine 162 together coordinate Zn(2+). Residues 331–335 (KMSKS) carry the 'KMSKS' region motif. Lysine 334 contacts ATP. Residues 580–682 (DFAKLDMRVA…NGVTAGMQVK (103 aa)) enclose the tRNA-binding domain.

Belongs to the class-I aminoacyl-tRNA synthetase family. MetG type 1 subfamily. In terms of assembly, homodimer. Zn(2+) is required as a cofactor.

The protein localises to the cytoplasm. It carries out the reaction tRNA(Met) + L-methionine + ATP = L-methionyl-tRNA(Met) + AMP + diphosphate. In terms of biological role, is required not only for elongation of protein synthesis but also for the initiation of all mRNA translation through initiator tRNA(fMet) aminoacylation. The sequence is that of Methionine--tRNA ligase from Haemophilus influenzae (strain PittGG).